The primary structure comprises 469 residues: Transcription factor E2FB (469 aa).

Disordered regions lie at residues 1–28 (MSEE…PPLV) and 84–118 (QTPV…AGSP). Polar residues-rich tracts occupy residues 8–22 (QFPS…SLSS) and 100–118 (SAKS…AGSP). A DNA-binding region spans residues 129–194 (RYDSSLGLLT…TLKNRIQWKG (66 aa)). A coiled-coil region spans residues 202-246 (ETIESIANLQDEVQNLAAEEARLDDQIRESQERLTSLSEDENNKR). The tract at residues 210–238 (LQDEVQNLAAEEARLDDQIRESQERLTSL) is leucine-zipper. The segment at 319–374 (PQADEPSNVPDEPSNVPDVPSNLPSTSGLPENHDVSMPMKEESTERNMETQEVDDT) is disordered. The segment covering 349–374 (ENHDVSMPMKEESTERNMETQEVDDT) has biased composition (basic and acidic residues). The retinoblastoma protein binding stretch occupies residues 403–419 (DYWFRSEVGEVSITDMW). The interval 426 to 469 (DWNQMITFDQDHAGPSDNKILEQPQTPSSPTPEESTATRSPTGS) is disordered. Positions 447–469 (EQPQTPSSPTPEESTATRSPTGS) are enriched in low complexity.

Belongs to the E2F/DP family. Heterodimer with DP proteins. Interacts (via dimerization domain) preferentially with DPA, but also with DPB. Interacts with PURA1 and retinoblastoma-related protein RBR1. Component of a DREAM-like complex which modulates a variety of developmentally regulated genes and of the mitotic genes in proliferating and differentiated cells. Interacts with MYB3R4 only at early stages of leaves development. Phosphorylated. In terms of tissue distribution, expressed in proliferating cells and several differentiated tissues. Detected in inflorescence and shoot apical meristems, cotyledonary vascular tissues, leaf primordia, young leaves, base of trichomes, central cylinder and elongation zone of roots, lateral root primordia, flowers, pistils of immature flowers and pollen grains.

Its subcellular location is the cytoplasm. The protein localises to the nucleus. Functionally, transcription activator that binds DNA cooperatively with DP proteins through the E2 recognition site, 5'-TTTC[CG]CGC-3' found in the promoter region of a number of genes whose products are involved in cell cycle regulation or in DNA replication. The binding of retinoblastoma-related proteins represses transactivation. Involved in the control of cell-cycle progression from G1 to S phase and from G2 to M phase. Stimulates cell proliferation and delays differentiation. Represses cell enlargement and endoreduplication in auxin-free conditions. The protein is Transcription factor E2FB (E2FB) of Arabidopsis thaliana (Mouse-ear cress).